We begin with the raw amino-acid sequence, 356 residues long: MKTLTPPRVTDTTLRDGSHAMRHQFTREQVRAIVAALDEAGVPVIEVTHGDGLAGSSIQYGFSATSELELIEEAAKTAKRAKIAALLLPGIGTRRELSAAIERGIKVVRIATQCTEADISEQHFGMAKEMGLETVGFLMMAHMRPPEFLAEQAALMESYGADCVYIVDSAGAMLPDDVRRRVAALKERLSIQVGFHAHNNLGLAIGNTLAAIEEGADQVDGCLRGLGAGAGNAPTELIAAVLDKLGINPGLDVFKLMDAAEYIVAPIMPYQPIPDRDAITIGYAGVYSTFLLHARHIAAEFGLDPREILVELGRRQAVAGQEDWILDVALDILRRKRAAEGAGDAREPAAAERSAD.

A Pyruvate carboxyltransferase domain is found at 7-257 (PRVTDTTLRD…NPGLDVFKLM (251 aa)). Substrate is bound at residue 15-16 (RD). Asp16 serves as a coordination point for Mn(2+). The Proton acceptor role is filled by His19. Substrate-binding residues include Ser169 and His196. The Mn(2+) site is built by His196 and His198. Tyr287 serves as a coordination point for substrate.

This sequence belongs to the 4-hydroxy-2-oxovalerate aldolase family.

The catalysed reaction is (S)-4-hydroxy-2-oxopentanoate = acetaldehyde + pyruvate. The sequence is that of 4-hydroxy-2-oxovalerate aldolase from Thermomicrobium roseum (strain ATCC 27502 / DSM 5159 / P-2).